A 520-amino-acid polypeptide reads, in one-letter code: Cytochrome b5 reductase 4 (520 aa).

An N-acetylmethionine modification is found at M1. Low complexity predominate over residues 1 to 16; the sequence is MLNVPSQSFPGPSSQQ. The tract at residues 1-27 is disordered; sequence MLNVPSQSFPGPSSQQRVASGGRSKVP. The 77-residue stretch at 54-130 folds into the Cytochrome b5 heme-binding domain; that stretch reads LIEVTEEELK…LKECLVGRMA (77 aa). Heme is bound by residues H89 and H112. The region spanning 164-255 is the CS domain; the sequence is PSSPSYDWFQ…KENTSWKCLG (92 aa). An FAD-binding FR-type domain is found at 272–384; that stretch reads LFYRKCQLVS…SNPEGNFIIS (113 aa). FAD contacts are provided by residues 364–379 and 391–423; these read DQLQ…NPEG and DLFL…KVKL.

This sequence belongs to the flavoprotein pyridine nucleotide cytochrome reductase family. FAD is required as a cofactor.

The protein localises to the endoplasmic reticulum. The enzyme catalyses 2 Fe(III)-[cytochrome b5] + NADH = 2 Fe(II)-[cytochrome b5] + NAD(+) + H(+). Its function is as follows. NADH-cytochrome b5 reductase involved in endoplasmic reticulum stress response pathway. Plays a critical role in protecting pancreatic beta-cells against oxidant stress, possibly by protecting the cell from excess buildup of reactive oxygen species (ROS). The sequence is that of Cytochrome b5 reductase 4 (CYB5R4) from Bos taurus (Bovine).